The following is a 152-amino-acid chain: Transcriptional regulator MraZ (152 aa).

2 SpoVT-AbrB domains span residues 5 to 52 (HSNR…PMPE) and 81 to 124 (ATEV…DQGR).

It belongs to the MraZ family. In terms of assembly, forms oligomers.

It is found in the cytoplasm. The protein localises to the nucleoid. The protein is Transcriptional regulator MraZ of Solidesulfovibrio magneticus (strain ATCC 700980 / DSM 13731 / RS-1) (Desulfovibrio magneticus).